Reading from the N-terminus, the 138-residue chain is Ferredoxin-2 (138 aa).

One can recognise a 2Fe-2S ferredoxin-type domain in the interval 27–117 (ADANLQSTDF…DAKIVYNLKH (91 aa)). Residues C62, C67, C70, and C100 each coordinate [2Fe-2S] cluster.

It belongs to the 2Fe2S plant-type ferredoxin family. The cofactor is [2Fe-2S] cluster.

Functionally, ferredoxins are iron-sulfur proteins that transfer electrons in a wide variety of metabolic reactions. This Haloarcula marismortui (strain ATCC 43049 / DSM 3752 / JCM 8966 / VKM B-1809) (Halobacterium marismortui) protein is Ferredoxin-2 (fer2).